The chain runs to 296 residues: Solute carrier protein FPSE_08119 (296 aa).

3 consecutive transmembrane segments (helical) span residues 12–32 (GLAA…GMVA), 122–142 (AGVG…VILI), and 219–239 (AVAA…FDFV). Solcar repeat units follow at residues 16–102 (LQTA…FEKE), 114–205 (LSFG…AKNQ), and 213–296 (SPPV…GPHS).

The protein belongs to the mitochondrial carrier (TC 2.A.29) family.

The protein resides in the mitochondrion inner membrane. Solute carrier protein; part of the Fusarium detoxification of benzoxazolinone cluster involved in the degradation of benzoxazolinones produced by the host plant. Maize, wheat, and rye produce the 2 benzoxazinone phytoanticipins 2,4-dihy-droxy-7-methoxy-1,4-benzoxazin-3-one (DIMBOA) and 2,4-dihydroxy-1,4-benzoxazin-3-one (DIBOA) that, due to their inherent instability once released, spontaneously degrade to the more stable corresponding benzoxazolinones, 6-methoxy-2-benzoxazolinone (MBOA) and 2-benzoxazolinone (BOA), respectively. The sequence is that of Solute carrier protein FPSE_08119 from Fusarium pseudograminearum (strain CS3096) (Wheat and barley crown-rot fungus).